A 328-amino-acid chain; its full sequence is Putative gluconeogenesis factor (328 aa).

The protein belongs to the gluconeogenesis factor family.

The protein localises to the cytoplasm. Its function is as follows. Required for morphogenesis under gluconeogenic growth conditions. This chain is Putative gluconeogenesis factor, found in Aquifex aeolicus (strain VF5).